A 214-amino-acid chain; its full sequence is Protein PAM68, chloroplastic (214 aa).

2 disordered regions span residues 1–26 (MASVPCSFKLSAHRRSSSKLDGNNKQ) and 62–111 (ATMN…ERGV). A chloroplast-targeting transit peptide spans 1-35 (MASVPCSFKLSAHRRSSSKLDGNNKQCSSLVERLR). Residues 36–124 (DKTKSQVPKS…IVTNRMISRM (89 aa)) lie on the Stromal side of the membrane. Positions 75 to 84 (KKTKKSKKPK) are enriched in basic residues. Residues 89 to 106 (SDEDDDDEDEDDDDEEDE) are compositionally biased toward acidic residues. Residues 125–145 (GFTVGLPLFIGLLFFPFFYYL) traverse the membrane as a helical segment. Residues 146-152 (KVGLKVD) are Lumenal, thylakoid-facing. Residues 153-173 (VPTWVPFIVSFVFFGTALAGV) traverse the membrane as a helical segment. Residues 174-214 (SYGIVSSSWDPLREGSLLGWNEAKKNWPVFWQSFWNSSDKR) are Stromal-facing.

In terms of assembly, interacts with the PSII subunits psbA, psbB, psbC, psbD, psbH and psbI, but not with psbE, psbF or psbO. Interacts with the PSII assembly factors HCF136, LPA1, LPA2 and ALB3.

It localises to the plastid. The protein resides in the chloroplast thylakoid membrane. In terms of biological role, involved in early steps in photosystem II (PSII) biogenesis and in maturation and stability of newly synthesized psbA protein. The sequence is that of Protein PAM68, chloroplastic (PAM68) from Arabidopsis thaliana (Mouse-ear cress).